The sequence spans 196 residues: Imidazoleglycerol-phosphate dehydratase (196 aa).

This sequence belongs to the imidazoleglycerol-phosphate dehydratase family.

The protein localises to the cytoplasm. The catalysed reaction is D-erythro-1-(imidazol-4-yl)glycerol 3-phosphate = 3-(imidazol-4-yl)-2-oxopropyl phosphate + H2O. It functions in the pathway amino-acid biosynthesis; L-histidine biosynthesis; L-histidine from 5-phospho-alpha-D-ribose 1-diphosphate: step 6/9. This chain is Imidazoleglycerol-phosphate dehydratase, found in Akkermansia muciniphila (strain ATCC BAA-835 / DSM 22959 / JCM 33894 / BCRC 81048 / CCUG 64013 / CIP 107961 / Muc).